The chain runs to 90 residues: uncharacterized protein (90 aa).

A helical membrane pass occupies residues 46–62 (MALLVVFLVSLFACTTI).

The protein localises to the membrane. This is an uncharacterized protein from Haemophilus influenzae (strain ATCC 51907 / DSM 11121 / KW20 / Rd).